The primary structure comprises 430 residues: Inner membrane transport protein YbaT (430 aa).

The Cytoplasmic portion of the chain corresponds to 1–14 (MMNTEGNNGNKPLG). The chain crosses the membrane as a helical span at residues 15 to 35 (LWNVVSIGIGAMVGAGIFALL). The Periplasmic portion of the chain corresponds to 36–38 (GQA). The chain crosses the membrane as a helical span at residues 39-59 (ALLMEASTWVAFAFGGIVAMF). Residues 60–88 (SGYAYARLGASYPSNGGIIDFFRRGLGNG) are Cytoplasmic-facing. The helical transmembrane segment at 89 to 109 (VFSLALSLLYLLTLAVSIAMV) threads the bilayer. Over 110-128 (ARAFGAYAVQFLHEGSQEE) the chain is Periplasmic. Residues 129–149 (HLILLYALGIIAVMTLFNSLS) form a helical membrane-spanning segment. At 150-157 (NHAVGRLE) the chain is on the cytoplasmic side. A helical transmembrane segment spans residues 158–178 (VILVGIKMMILLLLIIAGVWS). At 179 to 192 (LQPAHISVSAPPSS) the chain is on the periplasmic side. The chain crosses the membrane as a helical span at residues 193-213 (GAFFSCIGITFLAYAGFGMMA). Residues 214–228 (NAADKVKDPQVIMPR) are Cytoplasmic-facing. The chain crosses the membrane as a helical span at residues 229 to 249 (AFLVAIGVTTLLYISLALVLL). Over 250–272 (SDVSALELEKYADTAVAQAASPL) the chain is Periplasmic. The helical transmembrane segment at 273–293 (LGHVGYVIVVIGALLATASAI) threads the bilayer. Residues 294 to 325 (NANLFAVFNIMDNMGSERELPKLMNKSLWRQS) are Cytoplasmic-facing. Residues 326-346 (TWGNIIVVVLIMLMTAALNLG) traverse the membrane as a helical segment. Serine 347 is a topological domain (periplasmic). Residues 348–368 (LASVASATFLICYLAVFVVAI) form a helical membrane-spanning segment. At 369 to 379 (RLRHDIHASLP) the chain is on the cytoplasmic side. The chain crosses the membrane as a helical span at residues 380-400 (ILIVGTLVMLLVIVGFIYSLW). The Periplasmic segment spans residues 401–403 (SQG). The chain crosses the membrane as a helical span at residues 404–424 (SRALIWIIGSLLLSLIVAMVM). The Cytoplasmic segment spans residues 425–430 (KRNKTV).

The protein belongs to the amino acid-polyamine-organocation (APC) superfamily.

The protein resides in the cell inner membrane. Functionally, probable amino-acid or metabolite transport protein. This is Inner membrane transport protein YbaT (ybaT) from Escherichia coli (strain K12).